We begin with the raw amino-acid sequence, 215 residues long: 3-demethoxyubiquinol 3-hydroxylase (215 aa).

Residues E64, E94, H97, E146, E178, and H181 each contribute to the Fe cation site.

It belongs to the COQ7 family. Fe cation serves as cofactor.

It localises to the cell membrane. It carries out the reaction a 5-methoxy-2-methyl-3-(all-trans-polyprenyl)benzene-1,4-diol + AH2 + O2 = a 3-demethylubiquinol + A + H2O. Its pathway is cofactor biosynthesis; ubiquinone biosynthesis. Catalyzes the hydroxylation of 2-nonaprenyl-3-methyl-6-methoxy-1,4-benzoquinol during ubiquinone biosynthesis. The sequence is that of 3-demethoxyubiquinol 3-hydroxylase from Pseudomonas fluorescens (strain ATCC BAA-477 / NRRL B-23932 / Pf-5).